The following is a 431-amino-acid chain: UDP-N-acetylglucosamine 1-carboxyvinyltransferase (431 aa).

22–23 (KN) is a binding site for phosphoenolpyruvate. UDP-N-acetyl-alpha-D-glucosamine is bound at residue R93. C117 (proton donor) is an active-site residue. C117 is modified (2-(S-cysteinyl)pyruvic acid O-phosphothioketal). Residues D307 and V329 each contribute to the UDP-N-acetyl-alpha-D-glucosamine site.

Belongs to the EPSP synthase family. MurA subfamily.

The protein resides in the cytoplasm. The enzyme catalyses phosphoenolpyruvate + UDP-N-acetyl-alpha-D-glucosamine = UDP-N-acetyl-3-O-(1-carboxyvinyl)-alpha-D-glucosamine + phosphate. Its pathway is cell wall biogenesis; peptidoglycan biosynthesis. Functionally, cell wall formation. Adds enolpyruvyl to UDP-N-acetylglucosamine. This chain is UDP-N-acetylglucosamine 1-carboxyvinyltransferase, found in Nitrosococcus oceani (strain ATCC 19707 / BCRC 17464 / JCM 30415 / NCIMB 11848 / C-107).